Reading from the N-terminus, the 141-residue chain is HTH-type transcriptional repressor NsrR (141 aa).

The HTH rrf2-type domain occupies 2–129; it reads QLTSFTDYGL…DQYTLADMVK (128 aa). A DNA-binding region (H-T-H motif) is located at residues 28–51; that stretch reads ISEVTEVYGVSRNHMVKIINQLSR. Positions 91, 96, and 102 each coordinate [2Fe-2S] cluster.

The cofactor is [2Fe-2S] cluster.

Functionally, nitric oxide-sensitive repressor of genes involved in protecting the cell against nitrosative stress. May require iron for activity. This is HTH-type transcriptional repressor NsrR from Pectobacterium atrosepticum (strain SCRI 1043 / ATCC BAA-672) (Erwinia carotovora subsp. atroseptica).